The chain runs to 185 residues: Ribosome-recycling factor (185 aa).

The protein belongs to the RRF family.

The protein resides in the cytoplasm. In terms of biological role, responsible for the release of ribosomes from messenger RNA at the termination of protein biosynthesis. May increase the efficiency of translation by recycling ribosomes from one round of translation to another. The chain is Ribosome-recycling factor from Wolbachia pipientis subsp. Culex pipiens (strain wPip).